The chain runs to 461 residues: Photosystem II CP43 reaction center protein (461 aa).

Residues 1–2 (ME) constitute a propeptide that is removed on maturation. Thr-3 bears the N-acetylthreonine mark. Thr-3 is subject to Phosphothreonine. 5 helical membrane-spanning segments follow: residues 57–81 (LFEV…PHLA), 122–143 (LLGP…KDRN), 166–188 (KALY…RKIT), 243–263 (KPFA…LSYS), and 279–300 (WFNN…ASQA). Position 355 (Glu-355) interacts with [CaMn4O5] cluster. A helical membrane pass occupies residues 435–459 (RARAAAAGFEKGIDRDFEPVLSMTP).

Belongs to the PsbB/PsbC family. PsbC subfamily. As to quaternary structure, PSII is composed of 1 copy each of membrane proteins PsbA, PsbB, PsbC, PsbD, PsbE, PsbF, PsbH, PsbI, PsbJ, PsbK, PsbL, PsbM, PsbT, PsbX, PsbY, PsbZ, Psb30/Ycf12, at least 3 peripheral proteins of the oxygen-evolving complex and a large number of cofactors. It forms dimeric complexes. It depends on Binds multiple chlorophylls and provides some of the ligands for the Ca-4Mn-5O cluster of the oxygen-evolving complex. It may also provide a ligand for a Cl- that is required for oxygen evolution. PSII binds additional chlorophylls, carotenoids and specific lipids. as a cofactor.

The protein localises to the plastid. Its subcellular location is the chloroplast thylakoid membrane. One of the components of the core complex of photosystem II (PSII). It binds chlorophyll and helps catalyze the primary light-induced photochemical processes of PSII. PSII is a light-driven water:plastoquinone oxidoreductase, using light energy to abstract electrons from H(2)O, generating O(2) and a proton gradient subsequently used for ATP formation. The polypeptide is Photosystem II CP43 reaction center protein (Platanus occidentalis (Sycamore)).